A 315-amino-acid chain; its full sequence is Homoserine kinase (315 aa).

Residue 97–107 (PPARGLGSSAT) participates in ATP binding.

Belongs to the GHMP kinase family. Homoserine kinase subfamily.

It localises to the cytoplasm. It catalyses the reaction L-homoserine + ATP = O-phospho-L-homoserine + ADP + H(+). Its pathway is amino-acid biosynthesis; L-threonine biosynthesis; L-threonine from L-aspartate: step 4/5. Functionally, catalyzes the ATP-dependent phosphorylation of L-homoserine to L-homoserine phosphate. The chain is Homoserine kinase from Prochlorococcus marinus (strain MIT 9515).